Here is a 1067-residue protein sequence, read N- to C-terminus: Probable importin-5 homolog (1067 aa).

24 HEAT repeats span residues 3-34 (LQPI…YKNH), 42-75 (SFIV…SGNI), 93-120 (FAVR…QLVP), 125-152 (PEIL…LIGA), 164-197 (APHF…STFI), 206-243 (VFKP…IAQY), 251-286 (NFDM…FAEF), 295-347 (LYLE…HCVS), 349-381 (GLWE…SSIS), 385-425 (EKQI…ASYL), 427-466 (REMQ…LDEI), 468-508 (PNRV…VDGI), 510-553 (EEFT…GLAV), 555-596 (KKVF…AQCL), 598-658 (EDFI…AMEL), 661-703 (HLFP…SKQH), 718-757 (FTSR…MDIG), 763-826 (ADRI…CIQF), 832-869 (PYIA…ENGG), 876-909 (YPHI…AAEN), 917-960 (FLME…ITNL), 969-999 (PQTI…TLIR), 1008-1040 (QQYI…LALR), and 1041-1064 (SQES…LANF).

The protein belongs to the importin beta family. Importin beta-3 subfamily.

The protein resides in the cytoplasm. The protein localises to the nucleus. Functionally, functions in nuclear protein import as nuclear transport receptor. Serves as receptor for nuclear localization signals (NLS) in cargo substrates. The protein is Probable importin-5 homolog of Dictyostelium discoideum (Social amoeba).